Here is a 401-residue protein sequence, read N- to C-terminus: Shugoshin (401 aa).

Residues 3–49 (SKVEQQYKLLNAELMDQVQKQRLEIGEYRKRVISLEREIMDIREEHV) are a coiled coil. Residues 82–197 (EPAPAAQINR…VEETQTEQNE (116 aa)) form a disordered region. The segment covering 98-108 (SSREICKDMRR) has biased composition (basic and acidic residues). Low complexity predominate over residues 114-137 (RTTRPISPRRSSSVTSTVSSTSRR). 3 positions are modified to phosphoserine; by AurB: Ser124, Ser125, and Ser126. A compositionally biased stretch (acidic residues) spans 171 to 183 (VFDEDDSDDDFDE). Phosphothreonine; by PLK1 is present on Thr331. The interval 338 to 401 (EEMPSIRTRS…GSKGKAKAKK (64 aa)) is disordered. A compositionally biased stretch (polar residues) spans 348 to 377 (RTAANKKSENTDMSSSFCNNSARPSRSCRP). The segment covering 387–401 (NKLRNGSKGKAKAKK) has biased composition (basic residues).

It belongs to the shugoshin family. Homodimer. Interacts with Incenp. Phosphorylation by polo-like kinase (PLK) on Thr-331 antagonizes cohesive function. Phosphorylation on Thr-331 at the metaphase anaphase transition leads to its dissociation from centromeres. In contrast, phosphorylation by aurB/ial on either Ser-124, Ser-125 or Ser-126 is required for association with centromeres.

The protein localises to the chromosome. It localises to the centromere. Its function is as follows. Plays a central role in chromosome cohesion during meiosis and mitosis by preventing premature dissociation of cohesin complex from centromeres after prophase, when most of cohesin complex dissociates from chromosomes arms. May act by protecting or Rad21 from cleavage by Sse/separase. Required during meiosis in both males and females. The protein is Shugoshin (mei-S332) of Drosophila melanogaster (Fruit fly).